The chain runs to 146 residues: Large ribosomal subunit protein uL15 (146 aa).

Basic and acidic residues predominate over residues 1 to 13 (MKLHELRPAEGSK). The disordered stretch occupies residues 1–54 (MKLHELRPAEGSKKAPKRVGRGNGSGLGKTAGKGHKGQNARSGGGVRPGFEGGQ). 2 stretches are compositionally biased toward gly residues: residues 21 to 31 (RGNGSGLGKTA) and 42 to 52 (SGGGVRPGFEG).

This sequence belongs to the universal ribosomal protein uL15 family. Part of the 50S ribosomal subunit.

Binds to the 23S rRNA. The protein is Large ribosomal subunit protein uL15 of Clostridium novyi (strain NT).